The chain runs to 178 residues: Stathmin-2-B (178 aa).

The region spanning 38-178 (DDMEVKQLNK…KNKEQLELSG (141 aa)) is the SLD domain. Positions 75 to 178 (KRKDVSLEEI…KNKEQLELSG (104 aa)) form a coiled coil.

It belongs to the stathmin family. As to expression, nervous tissue.

Its subcellular location is the cytoplasm. The protein localises to the membrane. It is found in the cell projection. It localises to the lamellipodium. In Xenopus laevis (African clawed frog), this protein is Stathmin-2-B (stmn2-b).